A 281-amino-acid chain; its full sequence is Non-selective voltage-gated ion channel 2 (281 aa).

ATP contacts are provided by R11 and R19.

It belongs to the eukaryotic mitochondrial porin family.

Its subcellular location is the mitochondrion outer membrane. In terms of biological role, non-selective voltage-gated ion channel that mediates the transport of anions and cations through the mitochondrion outer membrane. The channel adopts an open conformation at low or zero membrane potential and a closed conformation at potentials above 30-40 mV. The open state has a weak anion selectivity whereas the closed state is cation-selective. Does not confer permeability to NADH. Catalyzes the scrambling of phospholipids across the outer mitochondrial membrane; the mechanism is unrelated to channel activity and is capable of translocating both anionic and zwitterionic phospholipids. The polypeptide is Non-selective voltage-gated ion channel 2 (POR2) (Saccharomyces cerevisiae (strain ATCC 204508 / S288c) (Baker's yeast)).